Reading from the N-terminus, the 96-residue chain is Co-chaperonin GroES (96 aa).

The protein belongs to the GroES chaperonin family. Heptamer of 7 subunits arranged in a ring. Interacts with the chaperonin GroEL.

Its subcellular location is the cytoplasm. Functionally, together with the chaperonin GroEL, plays an essential role in assisting protein folding. The GroEL-GroES system forms a nano-cage that allows encapsulation of the non-native substrate proteins and provides a physical environment optimized to promote and accelerate protein folding. GroES binds to the apical surface of the GroEL ring, thereby capping the opening of the GroEL channel. This chain is Co-chaperonin GroES, found in Haemophilus influenzae (strain ATCC 51907 / DSM 11121 / KW20 / Rd).